The sequence spans 693 residues: CREB-regulated transcription coactivator 2 (693 aa).

The span at 1-20 shows a compositional bias: polar residues; that stretch reads MATSGANGPGSATASASNPR. Residues 1 to 30 are disordered; the sequence is MATSGANGPGSATASASNPRKFSEKIALQK. Ala2 carries the post-translational modification N-acetylalanine. Arg51 carries the post-translational modification Asymmetric dimethylarginine; by PRMT6. Ser70, Ser86, and Ser90 each carry phosphoserine. Arg99, Arg120, and Arg123 each carry asymmetric dimethylarginine; by PRMT6. Ser136 is subject to Phosphoserine. Arg161 and Arg168 each carry asymmetric dimethylarginine; by PRMT6. At Thr169 the chain carries Phosphothreonine. At Ser171 the chain carries Phosphoserine. Positions 174-188 are enriched in polar residues; that stretch reads ALHTSVMNPSPQDTY. Positions 174-210 are disordered; it reads ALHTSVMNPSPQDTYPSPAAPSVLPSRRGGCLDGETD. The required for interaction with COP1 stretch occupies residues 209 to 215; sequence TDSKVPA. Lys234 is covalently cross-linked (Glycyl lysine isopeptide (Lys-Gly) (interchain with G-Cter in SUMO2)). Positions 271 to 287 match the Nuclear export signal motif; it reads TGGSLPDLTNLHFPPPL. 3 disordered regions span residues 271-307, 335-463, and 476-548; these read TGGSLPDLTNLHFPPPLPTPLDPEETAYPSLSGGSST, HSPL…SPTL, and KLPT…QSYH. The residue at position 274 (Ser274) is a Phosphoserine; by MARK2. The residue at position 306 (Ser306) is a Phosphoserine. Polar residues predominate over residues 339–351; sequence SHPSFQSSLSNPN. 2 stretches are compositionally biased toward low complexity: residues 352–378 and 386–424; these read LQASLSSPQPQLQGSHSHPSLPASSLA and SLGHPSLSAPALSSSSSSSSASSPVLGAPAYPASAPGAS. Phosphoserine is present on residues Ser368, Ser393, Ser433, and Ser456. Polar residues predominate over residues 447–463; that stretch reads SQQQLPKQFSPTMSPTL. Tyr488 carries the post-translational modification Phosphotyrosine. Ser489 and Ser492 each carry phosphoserine. Thr501 is modified (phosphothreonine). Residues Ser613 and Ser624 each carry the phosphoserine modification.

This sequence belongs to the TORC family. Binds, as a tetramer, through its N-terminal region, with the bZIP domain of CREB1. 'Arg-314' in the bZIP domain of CREB1 is essential for this interaction. Interaction, via its C-terminal, with TAF4, enhances recruitment of TAF4 to CREB1. Interacts with SIK2. Interacts with 14-3-3 proteins, YWHAB and YWHAG. Interacts (probably when phosphorylated at Ser-171) with YWHAE. Interacts with calmodulin-dependent catalytic subunit PPP3CA/calcineurin A. Interaction with COP1 mediates nuclear export and degradation of CRTC2. In terms of processing, phosphorylation/dephosphorylation states of Ser-171 are required for regulating transduction of CREB activity. CRTCs/TORCs are inactive when phosphorylated, and active when dephosphorylated at this site. This primary site of phosphorylation, is regulated by cAMP and calcium levels and is dependent on the phosphorylation of SIKs (SIK1 and SIK2) by LKB1. Following adenylyl cyclase activation, dephosphorylated at Ser-171 by PPP3CA/calcineurin A resulting in CRTC2 dissociation from 14-3-3 proteins and PPP3CA. Both insulin and AMPK increase this phosphorylation of CRTC2 while glucagon suppresses it. Phosphorylation at Ser-274 by MARK2 is induced under low glucose conditions and dephosphorylated in response to glucose influx. Phosphorylation at Ser-274 promotes interaction with 14-3-3 proteins and translocation to the cytoplasm. Asymmetric dimethylation of arginine resisues by PRMT6 enhances the association of CRTC2 with CREB on the promoters of gluconeogenic genes.

It is found in the cytoplasm. Its subcellular location is the nucleus. Its function is as follows. Transcriptional coactivator for CREB1 which activates transcription through both consensus and variant cAMP response element (CRE) sites. Acts as a coactivator, in the SIK/TORC signaling pathway, being active when dephosphorylated and acts independently of CREB1 'Ser-133' phosphorylation. Enhances the interaction of CREB1 with TAF4. Regulates gluconeogenesis as a component of the LKB1/AMPK/TORC2 signaling pathway. Regulates the expression of specific genes such as the steroidogenic gene, StAR. Potent coactivator of PPARGC1A and inducer of mitochondrial biogenesis in muscle cells. The protein is CREB-regulated transcription coactivator 2 (CRTC2) of Bos taurus (Bovine).